An 806-amino-acid chain; its full sequence is Leucine--tRNA ligase (806 aa).

A 'HIGH' region motif is present at residues 40-51; it reads PYPSGKGLHVGH. The 'KMSKS' region signature appears at 580–584; that stretch reads KMSKS. An ATP-binding site is contributed by Lys-583.

It belongs to the class-I aminoacyl-tRNA synthetase family.

The protein localises to the cytoplasm. The catalysed reaction is tRNA(Leu) + L-leucine + ATP = L-leucyl-tRNA(Leu) + AMP + diphosphate. The sequence is that of Leucine--tRNA ligase from Ureaplasma parvum serovar 3 (strain ATCC 27815 / 27 / NCTC 11736).